Here is a 541-residue protein sequence, read N- to C-terminus: Cytochrome P450 monooxygenase claU (541 aa).

A helical transmembrane segment spans residues 12–32; that stretch reads VIDTLVILFSTWAFLGLIRVI. Residue Cys480 participates in heme binding.

This sequence belongs to the cytochrome P450 family. Requires heme as cofactor.

It is found in the membrane. It participates in secondary metabolite biosynthesis; terpenoid biosynthesis. In terms of biological role, cytochrome P450 monooxygenase; part of the gene cluster that mediates the biosynthesis of clavilactone A, a meroterpenoid that features a unique benzo-fused ten-membered carbocyclic ring unit with an alpha,beta-epoxy-gamma-lactone moiety, forming an intriguing 10/5/3 tricyclic nested skeleton. Cytochrome P450 monooxygenases claO, claP, claQ, claU, and claW are close orthologs, suggesting that a redundant function or pseudogenes are present in the cla cluster. These monoxygenases are not involved in clavilactone A biosynthesis nor its modification. ClaR, ClaS and ClaT are sufficient to produce clavilactone A. The biosynthesis begins with the prenyltransferase claS that transfers geranyl pyrophosphate (GPP) to hydroquinone to produces geranylhydroquinone. The cytochrome P450 monooxygenase claR then catalyzes the diradical coupling reaction between the intramolecular hydroquinone and allyl moieties to form the benzo-fused ten-membered carbocyclic ring unit of wigantol. Finally the cytochrome P450 monooxygenase claT exquisitely and stereoselectively assembles the alpha,beta-epoxy-gamma-lactone moiety, producing clavilactone A via arnebinol A. The protein is Cytochrome P450 monooxygenase claU of Ampulloclitocybe clavipes (Club foot).